Reading from the N-terminus, the 139-residue chain is Small ribosomal subunit protein bS6 (139 aa).

This sequence belongs to the bacterial ribosomal protein bS6 family.

In terms of biological role, binds together with bS18 to 16S ribosomal RNA. This Borreliella afzelii (strain PKo) (Borrelia afzelii) protein is Small ribosomal subunit protein bS6.